The primary structure comprises 557 residues: Formate--tetrahydrofolate ligase 2 (557 aa).

66 to 73 provides a ligand contact to ATP; sequence TPAGEGKT.

The protein belongs to the formate--tetrahydrofolate ligase family.

It carries out the reaction (6S)-5,6,7,8-tetrahydrofolate + formate + ATP = (6R)-10-formyltetrahydrofolate + ADP + phosphate. Its pathway is one-carbon metabolism; tetrahydrofolate interconversion. In Streptococcus pyogenes serotype M1, this protein is Formate--tetrahydrofolate ligase 2.